The sequence spans 273 residues: Oligodendrocyte transcription factor 3 (273 aa).

Over residues 1–14 the composition is skewed to low complexity; that stretch reads MNSDSSSVSSRASS. Residues 1-72 are disordered; the sequence is MNSDSSSVSS…KAAGESSKYK (72 aa). Over residues 24–34 the composition is skewed to basic residues; it reads DHHHRHHHHHQ. The span at 37–47 shows a compositional bias: polar residues; the sequence is RLNSVSSTQGD. A coiled-coil region spans residues 69–90; it reads SKYKIKKQLSEQDLQQLRLKIN. The bHLH domain maps to 84-138; it reads QLRLKINGRERKRMHDLNLAMDGLREVMPYAHGPSVRKLSKIATLLLARNYILML.

In terms of tissue distribution, weakly expressed, mainly in non-neural tissues.

Its subcellular location is the nucleus. In terms of biological role, may determine the distinct specification program of class A neurons in the dorsal part of the spinal cord and suppress specification of class B neurons. The protein is Oligodendrocyte transcription factor 3 (Olig3) of Mus musculus (Mouse).